The chain runs to 166 residues: MKVLILSADGFEDLELIYPLHRIKEEGHEVYVASFQRGKITGKHGYTVNVDLAFDEVDPDEFDALVLPGGRAPEIVRLNEKAVAITKKMFEDGKPVASICHGPQILISAGVLKGRKGTSTVTIRDDVKNAGAEWIDAEVVVDGNWVSSRHPGDLYAWMREFVKLLR.

One can recognise a PfpI endopeptidase domain in the interval 1–166 (MKVLILSADG…WMREFVKLLR (166 aa)). Histidine 101 is an active-site residue.

It belongs to the peptidase C56 family. Homohexamer formed by a dimer of trimers that assemble into a hollow ring structure.

It localises to the cytoplasm. It catalyses the reaction N(omega)-(1-hydroxy-2-oxopropyl)-L-arginyl-[protein] + H2O = lactate + L-arginyl-[protein] + H(+). The enzyme catalyses N(6)-(1-hydroxy-2-oxopropyl)-L-lysyl-[protein] + H2O = lactate + L-lysyl-[protein] + H(+). It carries out the reaction S-(1-hydroxy-2-oxopropyl)-L-cysteinyl-[protein] + H2O = lactate + L-cysteinyl-[protein] + H(+). The catalysed reaction is N(omega)-(1-hydroxy-2-oxoethyl)-L-arginyl-[protein] + H2O = L-arginyl-[protein] + glycolate + H(+). It catalyses the reaction N(6)-(1-hydroxy-2-oxoethyl)-L-lysyl-[protein] + H2O = glycolate + L-lysyl-[protein] + H(+). The enzyme catalyses S-(1-hydroxy-2-oxoethyl)-L-cysteinyl-[protein] + H2O = glycolate + L-cysteinyl-[protein] + H(+). Its function is as follows. Deglycase that catalyzes the deglycation of the Maillard adducts formed between amino groups of proteins and reactive carbonyl groups of glyoxals. Thus, functions as a protein deglycase that repairs methylglyoxal- and glyoxal-glycated proteins, and releases repaired proteins and lactate or glycolate, respectively. Deglycates cysteine, arginine and lysine residues in proteins, and thus reactivates these proteins by reversing glycation by glyoxals. Acts on early glycation intermediates (hemithioacetals and aminocarbinols), preventing the formation of advanced glycation endproducts (AGE) that cause irreversible damage. Also displays proteolytic activity. The chain is Deglycase TK1284 from Thermococcus kodakarensis (strain ATCC BAA-918 / JCM 12380 / KOD1) (Pyrococcus kodakaraensis (strain KOD1)).